Here is a 314-residue protein sequence, read N- to C-terminus: WD repeat-containing protein 38 (314 aa).

WD repeat units lie at residues 19-58 (QHGGEVNSSAFSPDGQMLLTGSEDGCVYGWETRSGQLLWR), 61-100 (GHTGPVKFCRFSPDGHLFASASCDCTVRLWDVARAKCLRV), 103-142 (GHQRSVETVSFSPDSRQLASGGWDKRVMLWDVQSGQMLRL), 145-184 (GHRDSIQSSDFSPTVNCLATGSWDSTVHIWDLRMVTPAVS), 190-228 (GHSANISCLCYSASGLLASGSWDKTIHIWKPTTSSLLIQ), 231-272 (GHVT…ETLK), and 274-312 (VLDVAHTCAFTPDGKILVSGAADQTRRQISRTSKSPRDP). The tract at residues 294 to 314 (AADQTRRQISRTSKSPRDPQT) is disordered.

In Homo sapiens (Human), this protein is WD repeat-containing protein 38 (WDR38).